Reading from the N-terminus, the 509-residue chain is Maturase K (509 aa).

This sequence belongs to the intron maturase 2 family. MatK subfamily.

Its subcellular location is the plastid. It is found in the chloroplast. Its function is as follows. Usually encoded in the trnK tRNA gene intron. Probably assists in splicing its own and other chloroplast group II introns. The chain is Maturase K from Dalea purpurea (Violet prairie clover).